The primary structure comprises 505 residues: uncharacterized protein (505 aa).

The interval 461-480 is disordered; that stretch reads RTDVHPGNSDDEGAYSSADS.

To M.jannaschii MJ0787.

This is an uncharacterized protein from Methanothermobacter thermautotrophicus (strain ATCC 29096 / DSM 1053 / JCM 10044 / NBRC 100330 / Delta H) (Methanobacterium thermoautotrophicum).